The primary structure comprises 62 residues: Large ribosomal subunit protein uL30 (62 aa).

This sequence belongs to the universal ribosomal protein uL30 family. In terms of assembly, part of the 50S ribosomal subunit.

This is Large ribosomal subunit protein uL30 from Herpetosiphon aurantiacus (strain ATCC 23779 / DSM 785 / 114-95).